The sequence spans 188 residues: MVIGVLALQGAFIEHQKSLAACGVDSIQVRKPHQLEDIQGLIIPGGESTTMGKLMNQFELFEPIVEKAHNGLPLFGTCAGMIMLAKDIAGSTQPRLGLMDIEVERNAFGRQVESFETELTISELGEAPVRAVFIRAPYIKSVAANVKVLAKYNEKIVLAQQDHYLVAAFHPELTNDVRLHQHFLKMIK.

46 to 48 (GES) contributes to the L-glutamine binding site. C78 functions as the Nucleophile in the catalytic mechanism. L-glutamine is bound by residues R105 and 134–135 (IR). Catalysis depends on charge relay system residues H170 and E172.

It belongs to the glutaminase PdxT/SNO family. In terms of assembly, in the presence of PdxS, forms a dodecamer of heterodimers. Only shows activity in the heterodimer.

It catalyses the reaction aldehydo-D-ribose 5-phosphate + D-glyceraldehyde 3-phosphate + L-glutamine = pyridoxal 5'-phosphate + L-glutamate + phosphate + 3 H2O + H(+). The catalysed reaction is L-glutamine + H2O = L-glutamate + NH4(+). It functions in the pathway cofactor biosynthesis; pyridoxal 5'-phosphate biosynthesis. Its function is as follows. Catalyzes the hydrolysis of glutamine to glutamate and ammonia as part of the biosynthesis of pyridoxal 5'-phosphate. The resulting ammonia molecule is channeled to the active site of PdxS. This is Pyridoxal 5'-phosphate synthase subunit PdxT from Desulforamulus reducens (strain ATCC BAA-1160 / DSM 100696 / MI-1) (Desulfotomaculum reducens).